Consider the following 184-residue polypeptide: Shikimate kinase (184 aa).

An ATP-binding site is contributed by 20–25 (GVGKSR). Ser-24 serves as a coordination point for Mg(2+). Positions 42, 66, and 88 each coordinate substrate. Arg-127 contacts ATP. Substrate is bound at residue Arg-146. Position 162 (Arg-162) interacts with ATP.

It belongs to the shikimate kinase family. As to quaternary structure, monomer. Requires Mg(2+) as cofactor.

Its subcellular location is the cytoplasm. The enzyme catalyses shikimate + ATP = 3-phosphoshikimate + ADP + H(+). The protein operates within metabolic intermediate biosynthesis; chorismate biosynthesis; chorismate from D-erythrose 4-phosphate and phosphoenolpyruvate: step 5/7. Functionally, catalyzes the specific phosphorylation of the 3-hydroxyl group of shikimic acid using ATP as a cosubstrate. The sequence is that of Shikimate kinase from Thermus thermophilus (strain ATCC 27634 / DSM 579 / HB8).